Consider the following 427-residue polypeptide: Enolase (427 aa).

(2R)-2-phosphoglycerate is bound at residue Gln163. The active-site Proton donor is Glu205. Mg(2+)-binding residues include Asp242, Glu285, and Asp312. (2R)-2-phosphoglycerate is bound by residues Lys337, Arg366, Ser367, and Lys388. Lys337 (proton acceptor) is an active-site residue.

Belongs to the enolase family. The cofactor is Mg(2+).

Its subcellular location is the cytoplasm. The protein localises to the secreted. It is found in the cell surface. The enzyme catalyses (2R)-2-phosphoglycerate = phosphoenolpyruvate + H2O. It functions in the pathway carbohydrate degradation; glycolysis; pyruvate from D-glyceraldehyde 3-phosphate: step 4/5. Functionally, catalyzes the reversible conversion of 2-phosphoglycerate (2-PG) into phosphoenolpyruvate (PEP). It is essential for the degradation of carbohydrates via glycolysis. The chain is Enolase from Paraburkholderia phytofirmans (strain DSM 17436 / LMG 22146 / PsJN) (Burkholderia phytofirmans).